Reading from the N-terminus, the 298-residue chain is Probable endonuclease 4 (298 aa).

Residues His-69, His-110, Glu-145, Asp-179, His-182, His-214, Asp-227, His-229, and Glu-259 each contribute to the Zn(2+) site.

The protein belongs to the AP endonuclease 2 family. The cofactor is Zn(2+).

It catalyses the reaction Endonucleolytic cleavage to 5'-phosphooligonucleotide end-products.. Endonuclease IV plays a role in DNA repair. It cleaves phosphodiester bonds at apurinic or apyrimidinic (AP) sites, generating a 3'-hydroxyl group and a 5'-terminal sugar phosphate. This chain is Probable endonuclease 4, found in Geobacillus sp. (strain WCH70).